We begin with the raw amino-acid sequence, 475 residues long: Vasculin-like protein 1 (475 aa).

Phosphoserine is present on residues S49 and S76. 2 disordered regions span residues 92 to 115 and 160 to 191; these read NLSG…GSTG and PSLN…SAKQ. S202 carries the post-translational modification Phosphoserine. Disordered regions lie at residues 237–271 and 292–318; these read LVPK…EAAL and PKES…RRTT. The span at 294–311 shows a compositional bias: low complexity; sequence ESPSSTTPPIEISSSRLT. T300 is modified (phosphothreonine). S383 carries the phosphoserine modification. Residues 456–475 form a disordered region; it reads CEDSDTETSSSETSDDDAWK.

It belongs to the vasculin family.

Its subcellular location is the nucleus. Possible transcription factor. This Rattus norvegicus (Rat) protein is Vasculin-like protein 1 (Gpbp1l1).